We begin with the raw amino-acid sequence, 212 residues long: Glycerol-3-phosphate acyltransferase (212 aa).

5 helical membrane-spanning segments follow: residues 3–23 (IIIM…LWIG), 70–90 (IPII…FAII), 110–130 (AGVL…IFLL), 143–163 (ITVA…GFIL), and 164–184 (TDYD…IIIR).

The protein belongs to the PlsY family. In terms of assembly, probably interacts with PlsX.

The protein localises to the cell membrane. It carries out the reaction an acyl phosphate + sn-glycerol 3-phosphate = a 1-acyl-sn-glycero-3-phosphate + phosphate. The protein operates within lipid metabolism; phospholipid metabolism. Catalyzes the transfer of an acyl group from acyl-phosphate (acyl-PO(4)) to glycerol-3-phosphate (G3P) to form lysophosphatidic acid (LPA). This enzyme utilizes acyl-phosphate as fatty acyl donor, but not acyl-CoA or acyl-ACP. The polypeptide is Glycerol-3-phosphate acyltransferase (Streptococcus agalactiae serotype III (strain NEM316)).